Consider the following 146-residue polypeptide: Nucleoside diphosphate kinase (146 aa).

Residues K11, F59, R87, T93, R104, and N114 each coordinate ATP. Residue H117 is the Pros-phosphohistidine intermediate of the active site.

Belongs to the NDK family. In terms of assembly, homotetramer. Requires Mg(2+) as cofactor.

It is found in the cytoplasm. It carries out the reaction a 2'-deoxyribonucleoside 5'-diphosphate + ATP = a 2'-deoxyribonucleoside 5'-triphosphate + ADP. The enzyme catalyses a ribonucleoside 5'-diphosphate + ATP = a ribonucleoside 5'-triphosphate + ADP. Major role in the synthesis of nucleoside triphosphates other than ATP. The ATP gamma phosphate is transferred to the NDP beta phosphate via a ping-pong mechanism, using a phosphorylated active-site intermediate. The polypeptide is Nucleoside diphosphate kinase (Anaplasma marginale (strain Florida)).